Reading from the N-terminus, the 402-residue chain is UPF0261 protein y4oU (402 aa).

This sequence belongs to the UPF0261 family.

This is UPF0261 protein y4oU from Sinorhizobium fredii (strain NBRC 101917 / NGR234).